A 645-amino-acid chain; its full sequence is Putative bifunctional exonuclease/endonuclease protein MT2247 (645 aa).

Positions 44–207 (VVVDLETTGG…DDARATVDVL (164 aa)) constitute an Exonuclease domain. The GIY-YIG domain maps to 248 to 326 (HRPGVYLFRG…LSTHAPPYNR (79 aa)). Positions 603 to 645 (WQSDLPTEPHPSREQLFGRTGVDCRTGPPQPLLPGRQPFSTAG) are disordered. The span at 635–645 (LPGRQPFSTAG) shows a compositional bias: low complexity.

The chain is Putative bifunctional exonuclease/endonuclease protein MT2247 from Mycobacterium tuberculosis (strain CDC 1551 / Oshkosh).